The primary structure comprises 407 residues: uncharacterized protein (407 aa).

Disordered regions lie at residues 1-62 (MTGR…NGDP) and 350-379 (SVTP…KPSS). Residues 17-30 (PVEKMPRFQREHGA) show a composition bias toward basic and acidic residues.

This is an uncharacterized protein from Ictaluridae (bullhead catfishes).